A 127-amino-acid chain; its full sequence is Glycine cleavage system H protein (127 aa).

The region spanning 22 to 103 is the Lipoyl-binding domain; the sequence is EAYIGITDFA…AFANWIIKVE (82 aa). Position 63 is an N6-lipoyllysine (Lys63).

The protein belongs to the GcvH family. As to quaternary structure, the glycine cleavage system is composed of four proteins: P, T, L and H. Requires (R)-lipoate as cofactor.

Its function is as follows. The glycine cleavage system catalyzes the degradation of glycine. The H protein shuttles the methylamine group of glycine from the P protein to the T protein. The chain is Glycine cleavage system H protein from Alkaliphilus oremlandii (strain OhILAs) (Clostridium oremlandii (strain OhILAs)).